The primary structure comprises 219 residues: Mucosal pentraxin (219 aa).

A signal peptide spans 1–19; it reads MEKLIVGILFLSVLSGSVA. Residues 24–219 enclose the Pentraxin (PTX) domain; it reads KGKAFIFPQE…YVVIKPKLWP (196 aa). N51 carries an N-linked (GlcNAc...) asparagine glycan. A disulfide bridge connects residues C55 and C114. Ca(2+) contacts are provided by D77, N78, E155, Q156, D157, and Q167.

It belongs to the pentraxin family. In terms of assembly, homopentamer. Pentraxin (or pentaxin) have a discoid arrangement of 5 non-covalently bound subunits. The cofactor is Ca(2+). In terms of tissue distribution, expressed in colon.

It localises to the secreted. This is Mucosal pentraxin (Mptx1) from Mus musculus (Mouse).